A 255-amino-acid chain; its full sequence is Proteasome subunit alpha (255 aa).

A disordered region spans residues 228–255 (LLASPAGTSGPTGEPGPAGTAATDGGDL). Low complexity predominate over residues 232 to 255 (PAGTSGPTGEPGPAGTAATDGGDL).

This sequence belongs to the peptidase T1A family. The 20S proteasome core is composed of 14 alpha and 14 beta subunits that assemble into four stacked heptameric rings, resulting in a barrel-shaped structure. The two inner rings, each composed of seven catalytic beta subunits, are sandwiched by two outer rings, each composed of seven alpha subunits. The catalytic chamber with the active sites is on the inside of the barrel. Has a gated structure, the ends of the cylinder being occluded by the N-termini of the alpha-subunits. Is capped by the proteasome-associated ATPase, ARC.

It is found in the cytoplasm. It participates in protein degradation; proteasomal Pup-dependent pathway. Its activity is regulated as follows. The formation of the proteasomal ATPase ARC-20S proteasome complex, likely via the docking of the C-termini of ARC into the intersubunit pockets in the alpha-rings, may trigger opening of the gate for substrate entry. Interconversion between the open-gate and close-gate conformations leads to a dynamic regulation of the 20S proteasome proteolysis activity. Component of the proteasome core, a large protease complex with broad specificity involved in protein degradation. This Sanguibacter keddieii (strain ATCC 51767 / DSM 10542 / NCFB 3025 / ST-74) protein is Proteasome subunit alpha.